The sequence spans 646 residues: MGKSCVVTSSFSLLLLFLQTLKYVHAGFICYGDFFNVNYGVSRTYLFSSLPSNVVSNGGFYNASFGRDSKNNRVHVVALCRRGYEKQACKTCLEHVIEDTKSKCPRQKESFSWVTDEFDDVSCSLRYTNHSTLGKLELLPNTINPNPNSIDSKFNNMAMFSQEWIAMVNRTLEAASTAENSSVLKYYSATRTEFTQISDVYALMQCVPDLSPGNCKRCLRECVNDFQKQFWGRQGGGVSRPSCYFRWDLYPYYRAFDNVVRVPAPPPQASSTIIDYGRDEKSFQGSNIAIIVVPSVINLIIFVVLIFSWKRKQSHTIINDVFDSNNGQSMLRFDLRMIVTATNNFSLENKLGQGGFGSVYKGILPSGQEIAVKRLRKGSGQGGMEFKNEVLLLTRLQHRNLVKLLGFCNEKDEEILVYEFVPNSSLDHFIFDEEKRRVLTWDVRYTIIEGVARGLLYLHEDSQLRIIHRDLKASNILLDAEMNPKVADFGMARLFDMDETRGQTSRVVGTYGYMAPEYATYGQFSTKSDVYSFGVMLLEMISGKSNKKLEKEEEEEEEELPAFVWKRWIEGRFAEIIDPLAAPSNNISINEVMKLIHIGLLCVQEDISKRPSINSILFWLERHATITMPVPTPVAYLTRPSLSLGH.

Residues methionine 1–alanine 26 form the signal peptide. 2 consecutive Gnk2-homologous domains span residues glycine 27–threonine 132 and threonine 142–tyrosine 252. Over glycine 27 to asparagine 287 the chain is Extracellular. N-linked (GlcNAc...) asparagine glycans are attached at residues asparagine 62, asparagine 129, asparagine 169, and asparagine 180. A helical transmembrane segment spans residues isoleucine 288 to serine 308. At tryptophan 309 to histidine 646 the chain is on the cytoplasmic side. In terms of domain architecture, Protein kinase spans phenylalanine 345–isoleucine 626. ATP is bound by residues leucine 351–valine 359 and lysine 373. Tyrosine 418 is modified (phosphotyrosine). The Proton acceptor role is filled by aspartate 470. Serine 474 is subject to Phosphoserine. Residue threonine 510 is modified to Phosphothreonine. Phosphotyrosine is present on tyrosine 518.

The protein belongs to the protein kinase superfamily. Ser/Thr protein kinase family. CRK subfamily.

Its subcellular location is the membrane. The enzyme catalyses L-seryl-[protein] + ATP = O-phospho-L-seryl-[protein] + ADP + H(+). It catalyses the reaction L-threonyl-[protein] + ATP = O-phospho-L-threonyl-[protein] + ADP + H(+). The polypeptide is Cysteine-rich receptor-like protein kinase 37 (CRK37) (Arabidopsis thaliana (Mouse-ear cress)).